Here is an 841-residue protein sequence, read N- to C-terminus: Homeobox-leucine zipper protein ATHB-9 (841 aa).

Basic and acidic residues predominate over residues 1–18 (MMAHHSMDDRDSPDKGFD). Residues 1 to 21 (MMAHHSMDDRDSPDKGFDSGK) are disordered. A DNA-binding region (homeobox) is located at residues 18–81 (DSGKYVRYTP…NRRCREKQRK (64 aa)). The stretch at 85 to 118 (RLQTVNRKLSAMNKLLMEENDRLQKQVSNLVYEN) forms a coiled coil. Disordered regions lie at residues 140 to 162 (VVVS…RDVN) and 602 to 630 (DQKT…TKTD). Low complexity predominate over residues 145–155 (QQRQQQNPTHQ). The 229-residue stretch at 160–388 (DVNNPANLLS…IAQETSGEVQ (229 aa)) folds into the START domain. Over residues 603–614 (QKTNPNDHQSAS) the composition is skewed to polar residues.

Belongs to the HD-ZIP homeobox family. Class III subfamily. Binds DNA as homodimer. Interacts with ESR1 and ESR2. Interacts with ZPR3.

The protein localises to the nucleus. Functionally, probable transcription factor involved in the determination of adaxial-abaxial polarity in ovule primordium. Specifies adaxial leaf fates. Binds to the DNA sequence 5'-GTAAT[GC]ATTAC-3'. This is Homeobox-leucine zipper protein ATHB-9 (ATHB-9) from Arabidopsis thaliana (Mouse-ear cress).